The following is a 487-amino-acid chain: UDP-N-acetylmuramoyl-L-alanyl-D-glutamate--2,6-diaminopimelate ligase (487 aa).

The UDP-N-acetyl-alpha-D-muramoyl-L-alanyl-D-glutamate site is built by L23 and S25. 108–114 contacts ATP; the sequence is GTNGKTS. UDP-N-acetyl-alpha-D-muramoyl-L-alanyl-D-glutamate contacts are provided by residues 150-151, S177, Q183, and R185; that span reads TT. An N6-carboxylysine modification is found at K217. Meso-2,6-diaminopimelate is bound by residues R378, 402-405, G453, and E457; that span reads DNPR. The Meso-diaminopimelate recognition motif signature appears at 402–405; the sequence is DNPR.

This sequence belongs to the MurCDEF family. MurE subfamily. Mg(2+) is required as a cofactor. In terms of processing, carboxylation is probably crucial for Mg(2+) binding and, consequently, for the gamma-phosphate positioning of ATP.

The protein resides in the cytoplasm. The enzyme catalyses UDP-N-acetyl-alpha-D-muramoyl-L-alanyl-D-glutamate + meso-2,6-diaminopimelate + ATP = UDP-N-acetyl-alpha-D-muramoyl-L-alanyl-gamma-D-glutamyl-meso-2,6-diaminopimelate + ADP + phosphate + H(+). Its pathway is cell wall biogenesis; peptidoglycan biosynthesis. Functionally, catalyzes the addition of meso-diaminopimelic acid to the nucleotide precursor UDP-N-acetylmuramoyl-L-alanyl-D-glutamate (UMAG) in the biosynthesis of bacterial cell-wall peptidoglycan. The chain is UDP-N-acetylmuramoyl-L-alanyl-D-glutamate--2,6-diaminopimelate ligase from Ectopseudomonas mendocina (strain ymp) (Pseudomonas mendocina).